The following is a 444-amino-acid chain: Shufflon protein B' (444 aa).

The constant region stretch occupies residues 1–361 (MKKYDRGWAS…TGAILSCQSG (361 aa)). The tract at residues 362 to 444 (TWRKVGSGEL…GSITVYAICQ (83 aa)) is variable region.

The chain is Shufflon protein B' from Escherichia coli.